Here is a 113-residue protein sequence, read N- to C-terminus: Cell wall protein PGA59 (113 aa).

The signal sequence occupies residues 1-18 (MQFSSAIILSAVAGSALA). N-linked (GlcNAc...) asparagine glycosylation is found at Asn-22 and Asn-80. Gly-92 carries the GPI-anchor amidated glycine lipid modification. Residues 93-113 (AAAANAVPAVAAGLLALGAFM) constitute a propeptide, removed in mature form.

The protein belongs to the HWP1 family. Post-translationally, N- and O-glycosylated. The GPI-anchor is attached to the protein in the endoplasmic reticulum and serves to target the protein to the cell surface. There, the glucosamine-inositol phospholipid moiety is cleaved off and the GPI-modified mannoprotein is covalently attached via its lipidless GPI glycan remnant to the 1,6-beta-glucan of the outer cell wall layer.

Its subcellular location is the secreted. The protein resides in the cell wall. The protein localises to the membrane. Functionally, cell wall protein necessary for cell wall integrity. Plays only a minor role in hyphal morphogenesis and is not critical to biofilm formation. The protein is Cell wall protein PGA59 (PGA59) of Candida albicans (strain SC5314 / ATCC MYA-2876) (Yeast).